A 124-amino-acid chain; its full sequence is Small ribosomal subunit protein eS25 (124 aa).

Residues 1 to 22 show a composition bias toward basic and acidic residues; that stretch reads MPPKDSKQKKDTSKAKKDKDPV. The interval 1 to 37 is disordered; the sequence is MPPKDSKQKKDTSKAKKDKDPVNKSGGKAKKKKWSKG. The segment covering 27–37 has biased composition (basic residues); that stretch reads GKAKKKKWSKG.

This sequence belongs to the eukaryotic ribosomal protein eS25 family. Component of the small ribosomal subunit.

The protein resides in the cytoplasm. Its function is as follows. Component of the small ribosomal subunit. The ribosome is a large ribonucleoprotein complex responsible for the synthesis of proteins in the cell. This is Small ribosomal subunit protein eS25 (rps25) from Ictalurus punctatus (Channel catfish).